A 427-amino-acid polypeptide reads, in one-letter code: 3-phosphoshikimate 1-carboxyvinyltransferase (427 aa).

3-phosphoshikimate is bound by residues lysine 20, serine 21, and arginine 25. Lysine 20 contacts phosphoenolpyruvate. 2 residues coordinate phosphoenolpyruvate: glycine 92 and arginine 120. Residues serine 166, glutamine 168, aspartate 312, and lysine 339 each contribute to the 3-phosphoshikimate site. Glutamine 168 is a binding site for phosphoenolpyruvate. The active-site Proton acceptor is aspartate 312. Phosphoenolpyruvate-binding residues include arginine 343 and arginine 385.

This sequence belongs to the EPSP synthase family. In terms of assembly, monomer.

The protein localises to the cytoplasm. It carries out the reaction 3-phosphoshikimate + phosphoenolpyruvate = 5-O-(1-carboxyvinyl)-3-phosphoshikimate + phosphate. The protein operates within metabolic intermediate biosynthesis; chorismate biosynthesis; chorismate from D-erythrose 4-phosphate and phosphoenolpyruvate: step 6/7. Its function is as follows. Catalyzes the transfer of the enolpyruvyl moiety of phosphoenolpyruvate (PEP) to the 5-hydroxyl of shikimate-3-phosphate (S3P) to produce enolpyruvyl shikimate-3-phosphate and inorganic phosphate. This chain is 3-phosphoshikimate 1-carboxyvinyltransferase, found in Streptococcus pneumoniae serotype 2 (strain D39 / NCTC 7466).